Reading from the N-terminus, the 195-residue chain is Orotate phosphoribosyltransferase (195 aa).

Residues Arg87, Lys91, and 112–120 each bind 5-phospho-alpha-D-ribose 1-diphosphate; that span reads DDVATTGGS. Positions 116 and 144 each coordinate orotate.

It belongs to the purine/pyrimidine phosphoribosyltransferase family. PyrE subfamily. Homodimer. Requires Mg(2+) as cofactor.

The enzyme catalyses orotidine 5'-phosphate + diphosphate = orotate + 5-phospho-alpha-D-ribose 1-diphosphate. The protein operates within pyrimidine metabolism; UMP biosynthesis via de novo pathway; UMP from orotate: step 1/2. Catalyzes the transfer of a ribosyl phosphate group from 5-phosphoribose 1-diphosphate to orotate, leading to the formation of orotidine monophosphate (OMP). In Sulfurisphaera tokodaii (strain DSM 16993 / JCM 10545 / NBRC 100140 / 7) (Sulfolobus tokodaii), this protein is Orotate phosphoribosyltransferase.